Reading from the N-terminus, the 226-residue chain is Elongation factor 1-delta (226 aa).

The disordered stretch occupies residues 82-131 (SSVATPPVADTKASAAEDDDDDDVDLFGEETEEEKKASEERAAAVKASGK). Over residues 97-113 (AEDDDDDDVDLFGEETE) the composition is skewed to acidic residues. Over residues 114 to 124 (EEKKASEERAA) the composition is skewed to basic and acidic residues.

This sequence belongs to the EF-1-beta/EF-1-delta family. EF-1 is composed of 4 subunits: alpha, beta (1B-alpha=beta'), delta (1B-beta), and gamma (1B-gamma).

Its function is as follows. EF-1-beta and EF-1-beta' stimulate the exchange of GDP bound to EF-1-alpha to GTP. The chain is Elongation factor 1-delta from Spuriopimpinella brachycarpa (Chamnamul).